The following is a 330-amino-acid chain: Aspartate--ammonia ligase (330 aa).

The protein belongs to the class-II aminoacyl-tRNA synthetase family. AsnA subfamily.

Its subcellular location is the cytoplasm. It carries out the reaction L-aspartate + NH4(+) + ATP = L-asparagine + AMP + diphosphate + H(+). It functions in the pathway amino-acid biosynthesis; L-asparagine biosynthesis; L-asparagine from L-aspartate (ammonia route): step 1/1. The sequence is that of Aspartate--ammonia ligase from Streptococcus thermophilus (strain ATCC BAA-250 / LMG 18311).